Reading from the N-terminus, the 272-residue chain is Undecaprenyl-diphosphatase (272 aa).

Transmembrane regions (helical) follow at residues 2-22 (FDII…FLPI), 43-63 (FISM…VLLY), 82-102 (WQLW…GLPL), 110-130 (LHTP…FIIL), 185-205 (YVAT…VLII), 224-244 (VLMT…KWLL), and 252-272 (FKPF…VMFI).

It belongs to the UppP family.

It is found in the cell membrane. It catalyses the reaction di-trans,octa-cis-undecaprenyl diphosphate + H2O = di-trans,octa-cis-undecaprenyl phosphate + phosphate + H(+). In terms of biological role, catalyzes the dephosphorylation of undecaprenyl diphosphate (UPP). Confers resistance to bacitracin. This chain is Undecaprenyl-diphosphatase, found in Lacticaseibacillus casei (strain BL23) (Lactobacillus casei).